Here is a 1038-residue protein sequence, read N- to C-terminus: MANKLRKSNAIEWATATGTVPLLERSCCHSEDAALEPQASKTSHREQAPILRHLSQLSHLLIIAGLLIVCLAGVTEGRRHAPLMFEESDTGRRSNRPAVTECQFGKVLRELGSTWYADLGPPFGVMYCIKCECVAIPKKRRIVARVQCRNIKNECPPAKCDDPISLPGKCCKTCPGDRNDTDVALDVPVPNEEEERNMKHYAALLTGRTSYFLKGEEMKSMYTTYNPQNVVATARFLFHKKNLYYSFYTSSRIGRPRAIQFVDDAGVILEEHQLETTLAGTLSVYQNATGKICGVWRRVPRDYKRILRDDRLHVVLLWGNKQQAELALAGKVAKYTALQTELFSSLLEAPLPDGKTDPQLAGAGGTAIVSTSSGAASSMHLTLVFNGVFGAEEYADAALSVKIELAERKEVIFDEIPRVRKPSAEINVLELSSPISIQNLRLMSRGKLLLTVESKKYPHLRIQGHIVTRASCEIFQTLLAPHSAESSTKSSGLAWVYLNTDGSLAYNIETEHVNTRDRPNISLIEEQGKRKAKLEDLTPSFNFNQAIGSVEKLGPKVLESLYAGELGVNVATEHETSLIRGRLVPRPVADARDSAEPILLKRQEHTDAQNPHAVGMAWMSIDNECNLHYEVTLNGVPAQDLQLYLEEKPIEAIGAPVTRKLLEEFNGSYLEGFFLSMPSAELIKLEMSVCYLEVHSKHSKQLLLRGKLKSTKVPGHCFPVYTDNNVPVPGDHNDNHLVNGETKCFHSGRFYNESEQWRSAQDSCQMCACLRGQSSCEVIKCPALKCKSTEQLLQRDGECCPSCVPKKEAADYSAQSSPATNATDLLQQRRGCRLGEQFHPAGASWHPFLPPNGFDTCTTCSCDPLTLEIRCPRLVCPPLQCSEKLAYRPDKKACCKICPEGKQSSSNGHKTTPNNPNVLQDQAMQRSPSHSAEEVLANGGCKVVNKVYENGQEWHPILMSHGEQKCIKCRCKDSKVNCDRKRCSRSTCQQQTRVTSKRRLFEKPDAAAPAIDECCSTQCRRSRRHHKRQPHHQQRSSS.

Over 1–53 (MANKLRKSNAIEWATATGTVPLLERSCCHSEDAALEPQASKTSHREQAPILRH) the chain is Cytoplasmic. The helical; Signal-anchor for type II membrane protein transmembrane segment at 54–74 (LSQLSHLLIIAGLLIVCLAGV) threads the bilayer. Topologically, residues 75 to 1038 (TEGRRHAPLM…QPHHQQRSSS (964 aa)) are extracellular. A VWFC 1 domain is found at 100 to 175 (TECQFGKVLR…LPGKCCKTCP (76 aa)). Residues Asn179 and Asn287 are each glycosylated (N-linked (GlcNAc...) asparagine). 4 CHRD domains span residues 197–337 (NMKH…KYTA), 339–471 (QTEL…TRAS), 474–588 (IFQT…PRPV), and 592–713 (RDSA…STKV). 4 N-linked (GlcNAc...) asparagine glycosylation sites follow: Asn520, Asn666, Asn752, and Asn821. The region spanning 742-804 (TKCFHSGRFY…RDGECCPSCV (63 aa)) is the VWFC 2 domain. 2 consecutive VWFC domains span residues 830–899 (RGCR…KICP) and 939–1020 (GGCK…TQCR).

This sequence belongs to the chordin family. As to quaternary structure, component of a complex composed of dpp, sog and tsg. Interacts with palmitoyltransferase Hip14. Palmitoylated, probably by Hip14. Post-translationally, cleaved by metalloproteases tok and tld. Cleavage by tok during pupal development contributes to specification of the posterior crossvein in the wing. In terms of tissue distribution, abuts the dorsal dpp-expressing cells in a lateral stripe 14-16 cells wide. Later in embryogenesis it is expressed in neuroectoderm and in the endoderm spaced along the anterior-posterior axis of the developing gut.

The protein resides in the golgi apparatus membrane. It localises to the cell membrane. It is found in the secreted. Functionally, putative negative growth factor. Antagonist of dpp, a protein involved in patterning the dorsal region and in the development of the neuroectoderm; dpp inhibition is enhanced by tsg. Required for establishment of a narrow stripe of peak levels of BMP signaling in the dorsal midline of early embryos, that will give rise to the amnioserosa. During pupal development, plays a role in specification of the posterior crossvein in the wing. Exhibits both agonist and antagonist activities towards BMP signaling during pupal wing patterning. The polypeptide is Dorsal-ventral patterning protein Sog (sog) (Drosophila melanogaster (Fruit fly)).